The following is a 91-amino-acid chain: Non-specific lipid-transfer protein 1 (91 aa).

Disulfide bonds link cysteine 3–cysteine 50, cysteine 13–cysteine 27, cysteine 28–cysteine 73, and cysteine 48–cysteine 87.

The protein belongs to the plant LTP family.

Plant non-specific lipid-transfer proteins transfer phospholipids as well as galactolipids across membranes. May play a role in wax or cutin deposition in the cell walls of expanding epidermal cells and certain secretory tissues. In Morus nigra (Black mulberry), this protein is Non-specific lipid-transfer protein 1.